A 786-amino-acid chain; its full sequence is Calcium-independent phospholipase A2-gamma (786 aa).

A glycan (N-linked (GlcNAc...) asparagine) is linked at Asn-4. Disordered regions lie at residues 158-180 (KKYSDKSTEKSPVPEGRNHIIDK), 225-285 (KENS…SLPI), and 321-348 (SKSQAEEQEEPAKSEPAGSKDKTVEEKK). Positions 225 to 245 (KENSHFQEKSELEGKKVEEGK) are enriched in basic and acidic residues. Polar residues-rich tracts occupy residues 246-258 (SSSLDPGILTSQA) and 266-285 (SAGTMDKATSPSGTPESLPI). The PNPLA domain maps to 449–644 (LTIDGGGTRG…LLNNPSALAM (196 aa)). The short motif at 453-458 (GGGTRG) is the GXGXXG element. A helical transmembrane segment spans residues 483–503 (ICGVSTGAILAFMLGLFHLPL). Positions 485–489 (GVSTG) match the GXSXG motif. Ser-487 (nucleophile) is an active-site residue. The Proton acceptor role is filled by Asp-631. The short motif at 631 to 633 (DGG) is the DGA/G element. Residue Lys-740 is modified to N6-succinyllysine.

In terms of tissue distribution, expressed in kidney, heart and brain.

Its subcellular location is the endoplasmic reticulum membrane. It localises to the mitochondrion membrane. The protein localises to the peroxisome membrane. It carries out the reaction a 1,2-diacyl-sn-glycero-3-phosphocholine + H2O = a 1-acyl-sn-glycero-3-phosphocholine + a fatty acid + H(+). The catalysed reaction is a 1,2-diacyl-sn-glycero-3-phosphocholine + H2O = a 2-acyl-sn-glycero-3-phosphocholine + a fatty acid + H(+). The enzyme catalyses a 1,2-diacyl-sn-glycero-3-phosphoethanolamine + H2O = a 1-acyl-sn-glycero-3-phosphoethanolamine + a fatty acid + H(+). It catalyses the reaction a 1-O-(1Z-alkenyl)-2-acyl-sn-glycero-3-phosphocholine + H2O = a 1-O-(1Z-alkenyl)-sn-glycero-3-phosphocholine + a fatty acid + H(+). It carries out the reaction a 1-acyl-sn-glycero-3-phosphocholine + H2O = sn-glycerol 3-phosphocholine + a fatty acid + H(+). The catalysed reaction is 1-acyl-2-(9Z,12Z)-octadecadienoyl-sn-glycero-3-phosphocholine + H2O = a 1-acyl-sn-glycero-3-phosphocholine + (9Z,12Z)-octadecadienoate + H(+). The enzyme catalyses 1-acyl-2-(5Z,8Z,11Z,14Z-eicosatetraenoyl)-sn-glycero-3-phosphocholine + H2O = a 1-acyl-sn-glycero-3-phosphocholine + (5Z,8Z,11Z,14Z)-eicosatetraenoate + H(+). It catalyses the reaction 1-hexadecanoyl-2-(5Z,8Z,11Z,14Z-eicosatetraenoyl)-sn-glycero-3-phosphocholine + H2O = 1-hexadecanoyl-sn-glycero-3-phosphocholine + (5Z,8Z,11Z,14Z)-eicosatetraenoate + H(+). It carries out the reaction 1-octadecanoyl-2-(9Z-octadecenoyl)-sn-glycero-3-phosphocholine + H2O = 1-octadecanoyl-sn-glycero-3-phosphocholine + (9Z)-octadecenoate + H(+). The catalysed reaction is 1-hexadecanoyl-2-(9Z-octadecenoyl)-sn-glycero-3-phosphocholine + H2O = 1-hexadecanoyl-sn-glycero-3-phosphocholine + (9Z)-octadecenoate + H(+). The enzyme catalyses 1-hexadecanoyl-2-(9Z,12Z-octadecadienoyl)-sn-glycero-3-phosphocholine + H2O = (9Z,12Z)-octadecadienoate + 1-hexadecanoyl-sn-glycero-3-phosphocholine + H(+). It catalyses the reaction 1-acyl-2-(9Z,12Z)-octadecadienoyl-sn-glycero-3-phosphoethanolamine + H2O = a 1-acyl-sn-glycero-3-phosphoethanolamine + (9Z,12Z)-octadecadienoate + H(+). It carries out the reaction 1-acyl-2-(5Z,8Z,11Z,14Z)-eicosatetraenoyl-sn-glycero-3-phosphoethanolamine + H2O = a 1-acyl-sn-glycero-3-phosphoethanolamine + (5Z,8Z,11Z,14Z)-eicosatetraenoate + H(+). The catalysed reaction is 1-hexadecanoyl-2-(5Z,8Z,11Z,14Z-eicosatetraenoyl)-sn-glycero-3-phosphoethanolamine + H2O = 1-hexadecanoyl-sn-glycero-3-phosphoethanolamine + (5Z,8Z,11Z,14Z)-eicosatetraenoate + H(+). The enzyme catalyses 1-hexadecanoyl-2-(5Z,8Z,11Z,14Z-eicosatetraenoyl)-sn-glycero-3-phosphocholine + H2O = 2-(5Z,8Z,11Z,14Z)-eicosatetraenoyl-sn-glycero-3-phosphocholine + hexadecanoate + H(+). It catalyses the reaction 1-octadecanoyl-2-(9Z-octadecenoyl)-sn-glycero-3-phosphocholine + H2O = 2-(9Z-octadecenoyl)-sn-glycero-3-phosphocholine + octadecanoate + H(+). It carries out the reaction 1-hexadecanoyl-2-(4Z,7Z,10Z,13Z,16Z,19Z-docosahexaenoyl)-sn-glycero-3-phosphocholine + H2O = 2-(4Z,7Z,10Z,13Z,16Z,19Z-docosahexaenoyl)-sn-glycero-3-phosphocholine + hexadecanoate + H(+). The catalysed reaction is 1-O-(1Z)-hexadecenyl-2 (5Z,8Z,11Z,14Z)-eicosatetraenoyl-sn-glycero-3-phosphocholine + H2O = 1-(1Z-hexadecenyl)-sn-glycero-3-phosphocholine + (5Z,8Z,11Z,14Z)-eicosatetraenoate + H(+). The enzyme catalyses 1-O-(1Z-hexadecenyl)-2-(9Z-octadecenoyl)-sn-glycero-3-phosphocholine + H2O = 1-(1Z-hexadecenyl)-sn-glycero-3-phosphocholine + (9Z)-octadecenoate + H(+). It catalyses the reaction 1-hexadecanoyl-sn-glycero-3-phosphocholine + H2O = sn-glycerol 3-phosphocholine + hexadecanoate + H(+). It carries out the reaction 1',3'-bis-[1,2-di-(9Z,12Z-octadecadienoyl)-sn-glycero-3-phospho]-glycerol + H2O = 1'-[1,2-di-(9Z,12Z-octadecadienoyl)-sn-glycero-3-phospho]-3'-[1-(9Z,12Z-octadecadienoyl)-sn-glycero-3-phospho]-glycerol + (9Z,12Z)-octadecadienoate + H(+). The catalysed reaction is 1'-[1-acyl-2-(9-hydroxy-(10E,12Z)-octadecadienoyl)-sn-glycero-3-phospho]-3'-[1,2-diacyl-sn-glycero-3-phospho]-glycerol + H2O = 9-hydroxy-(10E,12Z)-octadecadienoate + 1'-[1,2-diacyl-sn-glycero-3-phospho],3'-[1-acyl-sn-glycero-3-phospho]-glycerol + H(+). The protein operates within phospholipid metabolism. Calcium-independent phospholipase. In terms of biological role, calcium-independent and membrane-bound phospholipase, that catalyzes the esterolytic cleavage of fatty acids from glycerophospholipids to yield free fatty acids and lysophospholipids, hence regulating membrane physical properties and the release of lipid second messengers and growth factors. Hydrolyzes phosphatidylethanolamine, phosphatidylcholine and probably phosphatidylinositol with a possible preference for the former. Has also a broad substrate specificity in terms of fatty acid moieties, hydrolyzing saturated and mono-unsaturated fatty acids at nearly equal rates from either the sn-1 or sn-2 position in diacyl phosphatidylcholine. However, has a weak activity toward polyunsaturated fatty acids at the sn-2 position, and thereby favors the production of 2-arachidonoyl lysophosphatidylcholine, a key branch point metabolite in eicosanoid signaling. On the other hand, can produce arachidonic acid from the sn-1 position of diacyl phospholipid and from the sn-2 position of arachidonate-containing plasmalogen substrates. Therefore, plays an important role in the mobilization of arachidonic acid in response to cellular stimuli and the generation of lipid second messengers. Can also hydrolyze lysophosphatidylcholine. In the mitochondrial compartment, catalyzes the hydrolysis and release of oxidized aliphatic chains from cardiolipin and integrates mitochondrial bioenergetics and signaling. It is essential for maintaining efficient bioenergetic mitochondrial function through tailoring mitochondrial membrane lipid metabolism and composition. The polypeptide is Calcium-independent phospholipase A2-gamma (Oryctolagus cuniculus (Rabbit)).